Consider the following 274-residue polypeptide: Large ribosomal subunit protein uL2cz/uL2cy (274 aa).

A disordered region spans residues 225–274; it reads PVDHPHGGGEGRAPIGRKKPVTPWGYPALGRRSRKRKKYSDNLILRRRTK.

Belongs to the universal ribosomal protein uL2 family. As to quaternary structure, part of the 50S ribosomal subunit.

The protein localises to the plastid. It localises to the chloroplast. The chain is Large ribosomal subunit protein uL2cz/uL2cy (rpl2-A) from Lotus japonicus (Lotus corniculatus var. japonicus).